Consider the following 342-residue polypeptide: N-acetyl-gamma-glutamyl-phosphate reductase (342 aa).

Cys149 is an active-site residue.

Belongs to the NAGSA dehydrogenase family. Type 1 subfamily.

Its subcellular location is the cytoplasm. It catalyses the reaction N-acetyl-L-glutamate 5-semialdehyde + phosphate + NADP(+) = N-acetyl-L-glutamyl 5-phosphate + NADPH + H(+). It participates in amino-acid biosynthesis; L-arginine biosynthesis; N(2)-acetyl-L-ornithine from L-glutamate: step 3/4. Catalyzes the NADPH-dependent reduction of N-acetyl-5-glutamyl phosphate to yield N-acetyl-L-glutamate 5-semialdehyde. The chain is N-acetyl-gamma-glutamyl-phosphate reductase from Cereibacter sphaeroides (strain ATCC 17023 / DSM 158 / JCM 6121 / CCUG 31486 / LMG 2827 / NBRC 12203 / NCIMB 8253 / ATH 2.4.1.) (Rhodobacter sphaeroides).